Here is a 325-residue protein sequence, read N- to C-terminus: D-alanine--D-alanine ligase (325 aa).

The ATP-grasp domain maps to 107 to 311 (KRLLLSESLP…YEALCVEVLK (205 aa)). Residue 137-192 (VDTLGLPLIVKPAREGSSLGLSKVTERAAMAAAVALAEKMDADILCEQFISGDEVT) coordinates ATP. The Mg(2+) site is built by D264, E278, and N280.

Belongs to the D-alanine--D-alanine ligase family. Mg(2+) serves as cofactor. Mn(2+) is required as a cofactor.

It localises to the cytoplasm. The enzyme catalyses 2 D-alanine + ATP = D-alanyl-D-alanine + ADP + phosphate + H(+). Its pathway is cell wall biogenesis; peptidoglycan biosynthesis. Its function is as follows. Cell wall formation. In Polaromonas naphthalenivorans (strain CJ2), this protein is D-alanine--D-alanine ligase.